A 355-amino-acid polypeptide reads, in one-letter code: Electron transfer flavoprotein subunit alpha, mitochondrial (355 aa).

FAD is bound at residue 295 to 323; that stretch reads LYIAVGISGAIQHLAGMKDSKVIVAINKD.

This sequence belongs to the ETF alpha-subunit/FixB family. As to quaternary structure, heterodimer of an alpha and a beta subunit. FAD is required as a cofactor.

It localises to the mitochondrion matrix. Its function is as follows. The electron transfer flavoprotein serves as a specific electron acceptor for several dehydrogenases, including five acyl-CoA dehydrogenases, glutaryl-CoA and sarcosine dehydrogenase. It transfers the electrons to the main mitochondrial respiratory chain via ETF-ubiquinone oxidoreductase (ETF dehydrogenase). The protein is Electron transfer flavoprotein subunit alpha, mitochondrial (etfa) of Dictyostelium discoideum (Social amoeba).